Reading from the N-terminus, the 218-residue chain is Cytidylate kinase (218 aa).

Position 7–15 (7–15) interacts with ATP; sequence GPSASGKSS.

The protein belongs to the cytidylate kinase family. Type 1 subfamily.

Its subcellular location is the cytoplasm. It catalyses the reaction CMP + ATP = CDP + ADP. The enzyme catalyses dCMP + ATP = dCDP + ADP. This is Cytidylate kinase from Borrelia duttonii (strain Ly).